A 136-amino-acid polypeptide reads, in one-letter code: Large ribosomal subunit protein bL12 (136 aa).

The protein belongs to the bacterial ribosomal protein bL12 family. Homodimer. Part of the ribosomal stalk of the 50S ribosomal subunit. Forms a multimeric L10(L12)X complex, where L10 forms an elongated spine to which 2 to 4 L12 dimers bind in a sequential fashion. Binds GTP-bound translation factors.

Its function is as follows. Forms part of the ribosomal stalk which helps the ribosome interact with GTP-bound translation factors. Is thus essential for accurate translation. The polypeptide is Large ribosomal subunit protein bL12 (Synechococcus sp. (strain JA-2-3B'a(2-13)) (Cyanobacteria bacterium Yellowstone B-Prime)).